Reading from the N-terminus, the 242-residue chain is Small ribosomal subunit protein uS2 (242 aa).

The protein belongs to the universal ribosomal protein uS2 family.

The chain is Small ribosomal subunit protein uS2 from Idiomarina loihiensis (strain ATCC BAA-735 / DSM 15497 / L2-TR).